The sequence spans 467 residues: Phosphoglucosamine mutase (467 aa).

Catalysis depends on Ser120, which acts as the Phosphoserine intermediate. Residues Ser120, Asp261, Asp263, and Asp265 each contribute to the Mg(2+) site. Ser120 is modified (phosphoserine).

The protein belongs to the phosphohexose mutase family. It depends on Mg(2+) as a cofactor. Post-translationally, activated by phosphorylation.

The enzyme catalyses alpha-D-glucosamine 1-phosphate = D-glucosamine 6-phosphate. Catalyzes the conversion of glucosamine-6-phosphate to glucosamine-1-phosphate. This Parafrankia sp. (strain EAN1pec) protein is Phosphoglucosamine mutase.